We begin with the raw amino-acid sequence, 84 residues long: Small ribosomal subunit protein uS17 (84 aa).

It belongs to the universal ribosomal protein uS17 family. As to quaternary structure, part of the 30S ribosomal subunit.

Functionally, one of the primary rRNA binding proteins, it binds specifically to the 5'-end of 16S ribosomal RNA. The sequence is that of Small ribosomal subunit protein uS17 from Legionella pneumophila (strain Paris).